The primary structure comprises 462 residues: L-seryl-tRNA(Sec) selenium transferase (462 aa).

Lysine 292 bears the N6-(pyridoxal phosphate)lysine mark.

The protein belongs to the SelA family. It depends on pyridoxal 5'-phosphate as a cofactor.

Its subcellular location is the cytoplasm. It catalyses the reaction L-seryl-tRNA(Sec) + selenophosphate + H(+) = L-selenocysteinyl-tRNA(Sec) + phosphate. It participates in aminoacyl-tRNA biosynthesis; selenocysteinyl-tRNA(Sec) biosynthesis; selenocysteinyl-tRNA(Sec) from L-seryl-tRNA(Sec) (bacterial route): step 1/1. Its function is as follows. Converts seryl-tRNA(Sec) to selenocysteinyl-tRNA(Sec) required for selenoprotein biosynthesis. This Geobacter sulfurreducens (strain ATCC 51573 / DSM 12127 / PCA) protein is L-seryl-tRNA(Sec) selenium transferase.